A 1318-amino-acid polypeptide reads, in one-letter code: MDRQCSERPYSCTPTGRVSSAVSQNSRISPPVSTSMKDSSCMKVHQDSARRDRWSHPTTILLHKSQSSQATLMLQEHRMFMGEAYSAATGFKMLQDMNSADPFHLKYIIKKIKNMAHGSPKLVMETIHDYFIDNPEISSRHKFRLFQTLEMVIGASDVLEETWEKTFTRLALENMTKATELEDIYQDAASNMLVAICRHSWRVVAQHLETELLTGVFPHRSLLYVMGVLSSSEELFSQEDKACWEEQLIQMAIKSVPFLSTDVWSKELLWTLTTPSWTQQEQSPEKAFLFTYYGLILQAEKNGATVRRHLQALLETSHQWPKQREGMALTLGLAATRHLDDVWAVLDQFGRSRPIRWSLPSSSPKNSEDLRWKWASSTILLAYGQVAAKARAHILPWVDNIVSRMVFYFHYSSWDETLKQSFLTATLMLMGAVSRSEGAHSYEFFQTSELLQCLMVLMEKEPQDTLCTRSRQQAMHIASSLCKLRPPIDLERKSQLLSTCFRSVFALPLLDALEKHTCLFLEPPNIQLWPVARERAGWTHQGWGPRAVLHCSEHLQSLYSRTMEALDFMLQSLIMQNPTADELHFLLSHLYIWLASEKAHERQRAVHSCMILLKFLNHNGYLDPKEDFKRIGQLVGILGMLCQDPDRATQRCSLEGASHLYQLLMCHKTGEALQAESQAPKELSQAHSDGAPLWNSRDQKATPLGPQEMAKNHIFQLCSFQVIKDIMQQLTLAELSDLIWTAIDGLGSTSPFRVQAASEMLLTAVQEHGAKLEIVSSMAQAIRLRLCSVHIPQAKEKTLHAITLLARSHTCELVATFLNISIPLDSHTFQLWRALGAGQPTSHLVLTTLLACLQERPLPTGASDSSPCPKEKTYLRLLAAMNMLHELQFAREFKQAVQEGYPKLFLALLTQMHYVLELNLPSEPQPKQQAQEAAVPSPQSCSTSLEALKSLLSTTGHWHDFAHLELQGSWELFTTIHTYPKGVGLLARAMVQNHCRQIPAVLRQLLPSLQSPQERERKVAILILTKFLYSPVLLEVLPKQAALTVLAQGLHDPSPEVRVLSLQGLSNILFHPDKGSLLQGQLRPLLDGFFQSSDQVIVCIMGTVSDTLHRLGAQGTGSQSLGVAISTRSFFNDERDGIRAAAMALFGDLVAAMADRELSGLRTQVHQSMVPLLLHLKDQCPAVATQAKFTFYRCAVLLRWRLLHTLFCTLAWERGLSARHFLWTCLMTRSQEEFSIHLSQALSYLHSHSCHIKTWVTLFIGHTICYHPQAVFQMLNAVDTNLLFRTFEHLRSDPEPSIREFATSQLSFLQKVSARPKQ.

Residues 1 to 38 form a disordered region; the sequence is MDRQCSERPYSCTPTGRVSSAVSQNSRISPPVSTSMKD. The segment covering 12–38 has biased composition (polar residues); that stretch reads CTPTGRVSSAVSQNSRISPPVSTSMKD. The HEAT 1 repeat unit spans residues 581–618; the sequence is DELHFLLSHLYIWLASEKAHERQRAVHSCMILLKFLNH. The disordered stretch occupies residues 676-695; sequence ESQAPKELSQAHSDGAPLWN. 8 HEAT repeats span residues 769–811, 840–880, 996–1033, 1037–1074, 1076–1113, 1118–1155, 1164–1200, and 1278–1315; these read GAKL…SHTC, PTSH…LLAA, RQIP…SPVL, LPKQ…HPDK, SLLQ…RLGA, SQSL…AMAD, QVHQ…LLRW, and VDTN…VSAR.

The protein is Maestro heat-like repeat family member 5 (MROH5) of Homo sapiens (Human).